The chain runs to 423 residues: Glucose-1-phosphate adenylyltransferase (423 aa).

Residues Tyr-112, Gly-177, 192–193, and Ser-210 each bind alpha-D-glucose 1-phosphate; that span reads EK.

It belongs to the bacterial/plant glucose-1-phosphate adenylyltransferase family. In terms of assembly, homotetramer.

The enzyme catalyses alpha-D-glucose 1-phosphate + ATP + H(+) = ADP-alpha-D-glucose + diphosphate. The protein operates within glycan biosynthesis; glycogen biosynthesis. Functionally, involved in the biosynthesis of ADP-glucose, a building block required for the elongation reactions to produce glycogen. Catalyzes the reaction between ATP and alpha-D-glucose 1-phosphate (G1P) to produce pyrophosphate and ADP-Glc. In Rhodospirillum rubrum (strain ATCC 11170 / ATH 1.1.1 / DSM 467 / LMG 4362 / NCIMB 8255 / S1), this protein is Glucose-1-phosphate adenylyltransferase.